The primary structure comprises 382 residues: Dual-specificity RNA methyltransferase RlmN (382 aa).

Glutamate 95 functions as the Proton acceptor in the catalytic mechanism. One can recognise a Radical SAM core domain in the interval 101 to 349 (EETRGTLCVS…TTVRKTRGDD (249 aa)). Cysteine 108 and cysteine 354 are disulfide-bonded. [4Fe-4S] cluster is bound by residues cysteine 115, cysteine 119, and cysteine 122. Residues 180–181 (GE), serine 212, 234–236 (SLH), and asparagine 311 each bind S-adenosyl-L-methionine. Catalysis depends on cysteine 354, which acts as the S-methylcysteine intermediate.

This sequence belongs to the radical SAM superfamily. RlmN family. Requires [4Fe-4S] cluster as cofactor.

Its subcellular location is the cytoplasm. The enzyme catalyses adenosine(2503) in 23S rRNA + 2 reduced [2Fe-2S]-[ferredoxin] + 2 S-adenosyl-L-methionine = 2-methyladenosine(2503) in 23S rRNA + 5'-deoxyadenosine + L-methionine + 2 oxidized [2Fe-2S]-[ferredoxin] + S-adenosyl-L-homocysteine. It catalyses the reaction adenosine(37) in tRNA + 2 reduced [2Fe-2S]-[ferredoxin] + 2 S-adenosyl-L-methionine = 2-methyladenosine(37) in tRNA + 5'-deoxyadenosine + L-methionine + 2 oxidized [2Fe-2S]-[ferredoxin] + S-adenosyl-L-homocysteine. Its function is as follows. Specifically methylates position 2 of adenine 2503 in 23S rRNA and position 2 of adenine 37 in tRNAs. m2A2503 modification seems to play a crucial role in the proofreading step occurring at the peptidyl transferase center and thus would serve to optimize ribosomal fidelity. This is Dual-specificity RNA methyltransferase RlmN from Paraburkholderia phymatum (strain DSM 17167 / CIP 108236 / LMG 21445 / STM815) (Burkholderia phymatum).